A 174-amino-acid chain; its full sequence is CDP-archaeol synthase (174 aa).

5 helical membrane-spanning segments follow: residues isoleucine 14–alanine 34, isoleucine 59–alanine 79, methionine 83–glycine 103, alanine 118–glycine 138, and alanine 149–leucine 169.

This sequence belongs to the CDP-archaeol synthase family. Requires Mg(2+) as cofactor.

Its subcellular location is the cell membrane. It catalyses the reaction 2,3-bis-O-(geranylgeranyl)-sn-glycerol 1-phosphate + CTP + H(+) = CDP-2,3-bis-O-(geranylgeranyl)-sn-glycerol + diphosphate. Its pathway is membrane lipid metabolism; glycerophospholipid metabolism. Functionally, catalyzes the formation of CDP-2,3-bis-(O-geranylgeranyl)-sn-glycerol (CDP-archaeol) from 2,3-bis-(O-geranylgeranyl)-sn-glycerol 1-phosphate (DGGGP) and CTP. This reaction is the third ether-bond-formation step in the biosynthesis of archaeal membrane lipids. This Aeropyrum pernix (strain ATCC 700893 / DSM 11879 / JCM 9820 / NBRC 100138 / K1) protein is CDP-archaeol synthase.